The chain runs to 466 residues: Amidase (466 aa).

Catalysis depends on charge relay system residues Lys79 and Ser148. The interval Tyr128 to Ser152 is disordered. The active-site Acyl-ester intermediate is the Ser172.

It belongs to the amidase family.

It carries out the reaction a monocarboxylic acid amide + H2O = a monocarboxylate + NH4(+). In Pseudomonas putida (Arthrobacter siderocapsulatus), this protein is Amidase.